Here is a 96-residue protein sequence, read N- to C-terminus: Large ribosomal subunit protein eL43 (96 aa).

The segment at 41–62 adopts a C4-type zinc-finger fold; sequence CPVCAFPKLKRAGTSIWVCDKC.

Belongs to the eukaryotic ribosomal protein eL43 family. Requires Zn(2+) as cofactor.

This chain is Large ribosomal subunit protein eL43, found in Methanococcus vannielii (strain ATCC 35089 / DSM 1224 / JCM 13029 / OCM 148 / SB).